We begin with the raw amino-acid sequence, 105 residues long: Cysteine-rich venom protein VAR2 (105 aa).

The N-terminal stretch at 1–22 is a signal peptide; it reads MILLKLYLTLAAILCQSRGTTS.

The protein belongs to the CRISP family. In terms of processing, contains 8 disulfide bonds. Expressed by the venom gland.

The protein resides in the secreted. Blocks ryanodine receptors, and potassium channels. In Varanus acanthurus (Ridge-tailed monitor), this protein is Cysteine-rich venom protein VAR2.